The following is a 118-amino-acid chain: Small ribosomal subunit protein uS13 (118 aa).

The interval 94–118 (SLPLRGQRTKTNARTRKGPRKPIKK) is disordered.

The protein belongs to the universal ribosomal protein uS13 family. In terms of assembly, part of the 30S ribosomal subunit. Forms a loose heterodimer with protein S19. Forms two bridges to the 50S subunit in the 70S ribosome.

Its function is as follows. Located at the top of the head of the 30S subunit, it contacts several helices of the 16S rRNA. In the 70S ribosome it contacts the 23S rRNA (bridge B1a) and protein L5 of the 50S subunit (bridge B1b), connecting the 2 subunits; these bridges are implicated in subunit movement. Contacts the tRNAs in the A and P-sites. The sequence is that of Small ribosomal subunit protein uS13 from Vibrio cholerae serotype O1 (strain ATCC 39315 / El Tor Inaba N16961).